Reading from the N-terminus, the 216-residue chain is Peptide methionine sulfoxide reductase MsrA (216 aa).

Cys-54 is a catalytic residue.

It belongs to the MsrA Met sulfoxide reductase family.

It catalyses the reaction L-methionyl-[protein] + [thioredoxin]-disulfide + H2O = L-methionyl-(S)-S-oxide-[protein] + [thioredoxin]-dithiol. It carries out the reaction [thioredoxin]-disulfide + L-methionine + H2O = L-methionine (S)-S-oxide + [thioredoxin]-dithiol. Has an important function as a repair enzyme for proteins that have been inactivated by oxidation. Catalyzes the reversible oxidation-reduction of methionine sulfoxide in proteins to methionine. This Xanthomonas oryzae pv. oryzae (strain PXO99A) protein is Peptide methionine sulfoxide reductase MsrA.